A 632-amino-acid chain; its full sequence is Thioredoxin domain-containing protein C959.05c (632 aa).

The N-terminal stretch at 1 to 22 (MKLFLYHFTFIVYYFIISFSYA) is a signal peptide. N-linked (GlcNAc...) asparagine glycans are attached at residues N35, N41, and N140. In terms of domain architecture, Thioredoxin spans 153–284 (SDSSSTDPAF…LLSYSNQVAS (132 aa)). C209 and C212 are oxidised to a cystine. N-linked (GlcNAc...) asparagine glycosylation is present at N557. Residues 583–603 (LIVFNLLIALLILSILTIISA) traverse the membrane as a helical segment.

Belongs to the protein disulfide isomerase family.

It localises to the endoplasmic reticulum membrane. It catalyses the reaction Catalyzes the rearrangement of -S-S- bonds in proteins.. Acts as a membrane-bound chaperone in endoplasmic reticulum quality control. Probably facilitates presentation of substrate to membrane-bound components of the degradation machinery. The chain is Thioredoxin domain-containing protein C959.05c from Schizosaccharomyces pombe (strain 972 / ATCC 24843) (Fission yeast).